A 108-amino-acid chain; its full sequence is Nucleoid-associated protein Bcen_6253 (108 aa).

A compositionally biased stretch (polar residues) spans 85-95; that stretch reads ATSQEKMSGMT. Residues 85-108 are disordered; the sequence is ATSQEKMSGMTSGLPLPPGFKLPF. Positions 99 to 108 are enriched in pro residues; the sequence is PLPPGFKLPF.

The protein belongs to the YbaB/EbfC family. In terms of assembly, homodimer.

It is found in the cytoplasm. The protein resides in the nucleoid. Binds to DNA and alters its conformation. May be involved in regulation of gene expression, nucleoid organization and DNA protection. This chain is Nucleoid-associated protein Bcen_6253, found in Burkholderia orbicola (strain AU 1054).